Here is a 131-residue protein sequence, read N- to C-terminus: Profilin (131 aa).

The protein belongs to the profilin family. As to quaternary structure, occurs in many kinds of cells as a complex with monomeric actin in a 1:1 ratio.

It localises to the cytoplasm. The protein localises to the cytoskeleton. Binds to actin and affects the structure of the cytoskeleton. At high concentrations, profilin prevents the polymerization of actin, whereas it enhances it at low concentrations. By binding to PIP2, it inhibits the formation of IP3 and DG. This Pyrus communis (Pear) protein is Profilin.